The sequence spans 235 residues: Ubiquinone/menaquinone biosynthesis C-methyltransferase UbiE (235 aa).

The S-adenosyl-L-methionine site is built by Thr-59, Asp-84, and Ser-123.

It belongs to the class I-like SAM-binding methyltransferase superfamily. MenG/UbiE family.

It catalyses the reaction a 2-demethylmenaquinol + S-adenosyl-L-methionine = a menaquinol + S-adenosyl-L-homocysteine + H(+). The catalysed reaction is a 2-methoxy-6-(all-trans-polyprenyl)benzene-1,4-diol + S-adenosyl-L-methionine = a 5-methoxy-2-methyl-3-(all-trans-polyprenyl)benzene-1,4-diol + S-adenosyl-L-homocysteine + H(+). It functions in the pathway quinol/quinone metabolism; menaquinone biosynthesis; menaquinol from 1,4-dihydroxy-2-naphthoate: step 2/2. It participates in cofactor biosynthesis; ubiquinone biosynthesis. Functionally, methyltransferase required for the conversion of demethylmenaquinol (DMKH2) to menaquinol (MKH2) and the conversion of 2-polyprenyl-6-methoxy-1,4-benzoquinol (DDMQH2) to 2-polyprenyl-3-methyl-6-methoxy-1,4-benzoquinol (DMQH2). This chain is Ubiquinone/menaquinone biosynthesis C-methyltransferase UbiE, found in Campylobacter jejuni subsp. jejuni serotype O:23/36 (strain 81-176).